The primary structure comprises 86 residues: Large ribosomal subunit protein bL27 (86 aa).

A disordered region spans residues methionine 1–lysine 24.

The protein belongs to the bacterial ribosomal protein bL27 family.

This chain is Large ribosomal subunit protein bL27, found in Prochlorococcus marinus (strain MIT 9312).